Consider the following 130-residue polypeptide: Small ribosomal subunit protein uS9 (130 aa).

The disordered stretch occupies residues V111–R130. Residues V116–R130 show a composition bias toward basic residues.

This sequence belongs to the universal ribosomal protein uS9 family.

This chain is Small ribosomal subunit protein uS9, found in Enterobacter sp. (strain 638).